A 190-amino-acid chain; its full sequence is Holliday junction branch migration complex subunit RuvA (190 aa).

The segment at 1-64 (MIGKLSGTLD…EDAQILYGFA (64 aa)) is domain I. Residues 65–137 (TSQERAAFRE…LKGKLGPDIG (73 aa)) form a domain II region. Residues 137 to 141 (GVAAS) are flexible linker. Residues 142 to 190 (VANDSQADILQALLALGYSDKEAAAALKALPSDVGVSEGIRLALRALGK) are domain III.

Belongs to the RuvA family. As to quaternary structure, homotetramer. Forms an RuvA(8)-RuvB(12)-Holliday junction (HJ) complex. HJ DNA is sandwiched between 2 RuvA tetramers; dsDNA enters through RuvA and exits via RuvB. An RuvB hexamer assembles on each DNA strand where it exits the tetramer. Each RuvB hexamer is contacted by two RuvA subunits (via domain III) on 2 adjacent RuvB subunits; this complex drives branch migration. In the full resolvosome a probable DNA-RuvA(4)-RuvB(12)-RuvC(2) complex forms which resolves the HJ.

The protein resides in the cytoplasm. In terms of biological role, the RuvA-RuvB-RuvC complex processes Holliday junction (HJ) DNA during genetic recombination and DNA repair, while the RuvA-RuvB complex plays an important role in the rescue of blocked DNA replication forks via replication fork reversal (RFR). RuvA specifically binds to HJ cruciform DNA, conferring on it an open structure. The RuvB hexamer acts as an ATP-dependent pump, pulling dsDNA into and through the RuvAB complex. HJ branch migration allows RuvC to scan DNA until it finds its consensus sequence, where it cleaves and resolves the cruciform DNA. This is Holliday junction branch migration complex subunit RuvA from Albidiferax ferrireducens (strain ATCC BAA-621 / DSM 15236 / T118) (Rhodoferax ferrireducens).